Consider the following 431-residue polypeptide: MNLDSALAYQSGFGNEFSSEALPGALPVGQNSPQKAPYGLYTELFSGTAFTMTRSEARRTWMYRIQPSANHPAFVKLERQLAGGPLGEVTPNRLRWNPLDLPTEPTDFIDGLVSMAANSGADKPAGISIYHYGANRSMERVFFNADGELLLVPQLGRLRIATELGVLDVAPLEIAVLPRGLKFRVELLDPQARGYVAENHGAPLRLPDLGPIGSNGLANPRDFLTPVAAYENLQQPTTLVQKFLGQLWGTELNHSPLNVVAWHGNNVPYKYDLRRFNTIGTVSFDHPDPSIFTVLTSPTSVHGLANLDFVIFPPRWMVAENTFRPPWFHRNLMNEFMGLIQGEYDAKAEGFVPGGASLHSCMSAHGPDGETCTKAINADLKPAKIDNTMAFMFETSQVLRPSRFALDCPQLQSTYDACWATLPATFDPTRR.

His286 acts as the Proton acceptor in catalysis. Residues His329 and Glu335 each coordinate Fe cation. 2 residues coordinate homogentisate: Tyr344 and His365. His365 serves as a coordination point for Fe cation.

The protein belongs to the homogentisate dioxygenase family. In terms of assembly, hexamer; dimer of trimers. It depends on Fe cation as a cofactor.

The enzyme catalyses homogentisate + O2 = 4-maleylacetoacetate + H(+). The protein operates within amino-acid degradation; L-phenylalanine degradation; acetoacetate and fumarate from L-phenylalanine: step 4/6. In terms of biological role, involved in the catabolism of homogentisate (2,5-dihydroxyphenylacetate or 2,5-OH-PhAc), a central intermediate in the degradation of phenylalanine and tyrosine. Catalyzes the oxidative ring cleavage of the aromatic ring of homogentisate to yield maleylacetoacetate. This Pseudomonas fluorescens (strain Pf0-1) protein is Homogentisate 1,2-dioxygenase.